We begin with the raw amino-acid sequence, 777 residues long: MRLKISLLKEPKHQELVSCVGWTTAEELYSCSDDHQIVKWNLLTSETSLIVKLPDDIYPIDLHWFPKSLGIKKQTQAESFVLTSSDGKFHLISKLGRVEKSVEAHCGAVLAGRWNYEGTALVTVGEDGQVKIWSKTGMLRSTLAQQGIPVYSVAWGPDSEKVLYTAGKQLIIKPLQPNAKVLQWKAHDGIILKVDWNSVNDLILSAGEDCKYKVWDSYGRVLYGSQPHEHPITSVAWAPDGELFAVGSFHTLRLCDKTGWSYALEKPNTGSIFNIAWSIDGTQIAGACGNGHVVFAHVVEQRWEWKNFQVTLTKRRTMQVRNVLNDAVDLLEFRDRVIKASLNHAHLVVSTSLQCYVFSTKNWNTPLIFDLKEGTVSLILQAERHFLLVDGGGIYLHSYEGRFISSPKFPGMRTDILNAQTVSLSNDTIAIKDKADEKIIFLFEASTGKPLGDGKLLSHKNEISEVALDQKGLTNDRKIAFIDKNRDLYITSVKRFGKEEQIIKLGTMVHTLAWCDTCNILCGLQDTRFTVWYYPNAVYVDRDILPKTLYERDASEYSKNPHIVSFVGNQVTVRRADGSLVHISISPYPAILHEYVSSSKWEDAVRLCRFVKEQSLWACLAAMAVANRDMVTAEIAYAAVGEIDKVRYINAMKDLPSRESKMAHILMFSGNIQEAETILLQAGLVYQAIQININLYNWERALELAVKYKTHVDTVLAYRQKFLETFGKQETNKRYLQYAEGLQIDWEKIKAKIEMEITKERDRSSSGQSSKNTGLKP.

WD repeat units lie at residues 12–50 (KHQELVSCVGWTTAEELYSCSDDHQIVKWNLLTSETSLI), 104–143 (AHCGAVLAGRWNYEGTALVTVGEDGQVKIWSKTGMLRSTL), 145–185 (QQGI…LQWK), 186–225 (AHDGIILKVDWNSVNDLILSAGEDCKYKVWDSYGRVLYGS), 227–265 (PHEHPITSVAWAPDGELFAVGSFHTLRLCDKTGWSYALE), 267–306 (PNTGSIFNIAWSIDGTQIAGACGNGHVVFAHVVEQRWEWK), and 504–542 (KLGTMVHTLAWCDTCNILCGLQDTRFTVWYYPNAVYVDR). The segment at 758-777 (TKERDRSSSGQSSKNTGLKP) is disordered. A compositionally biased stretch (polar residues) spans 765 to 777 (SSGQSSKNTGLKP).

Component of the IFT complex B, at least composed of IFT20, IFT22, IFT25, IFT27, IFT46, IFT52, TRAF3IP1/IFT54, IFT57, IFT74, IFT80, IFT81, and IFT88. Interacts with IFT88. Interacts with IFT57 and IFT70B.

The protein resides in the cytoplasm. It localises to the cytoskeleton. Its subcellular location is the cilium basal body. The protein localises to the cilium axoneme. In terms of biological role, component of the intraflagellar transport (IFT) complex B, which is essential for the development and maintenance of motile and sensory cilia. This is Intraflagellar transport protein 80 homolog (Ift80) from Rattus norvegicus (Rat).